The chain runs to 221 residues: DNA mismatch repair protein MutH (221 aa).

This sequence belongs to the MutH family.

It localises to the cytoplasm. Sequence-specific endonuclease that cleaves unmethylated GATC sequences. It is involved in DNA mismatch repair. This Vibrio cholerae serotype O1 (strain ATCC 39315 / El Tor Inaba N16961) protein is DNA mismatch repair protein MutH.